The sequence spans 401 residues: Putative TRAP transporter large permease protein HI_0050 (401 aa).

11 helical membrane-spanning segments follow: residues 31-51 (FPLM…HGGI), 70-90 (LGYV…SAVA), 115-135 (GLIC…PMII), 144-164 (ITKL…GLWV), 193-213 (AFWP…GIFT), 217-237 (AGVV…GLTF), 253-273 (MVMF…VAQI), 290-310 (ILMF…DLIP), 330-350 (IAYF…TPPV), 353-373 (VLYV…KGIA), and 375-395 (FLFV…IVIV).

It belongs to the TRAP transporter large permease family.

The protein localises to the cell inner membrane. The sequence is that of Putative TRAP transporter large permease protein HI_0050 from Haemophilus influenzae (strain ATCC 51907 / DSM 11121 / KW20 / Rd).